The primary structure comprises 541 residues: Chaperonin GroEL 2 (541 aa).

Residues 29–32 (TLGP), 86–90 (DGTTT), G413, 477–479 (NAA), and D493 each bind ATP.

It belongs to the chaperonin (HSP60) family. In terms of assembly, forms a cylinder of 14 subunits composed of two heptameric rings stacked back-to-back. Interacts with the co-chaperonin GroES.

It is found in the cytoplasm. It carries out the reaction ATP + H2O + a folded polypeptide = ADP + phosphate + an unfolded polypeptide.. In terms of biological role, together with its co-chaperonin GroES, plays an essential role in assisting protein folding. The GroEL-GroES system forms a nano-cage that allows encapsulation of the non-native substrate proteins and provides a physical environment optimized to promote and accelerate protein folding. This chain is Chaperonin GroEL 2, found in Nocardioides sp. (strain ATCC BAA-499 / JS614).